We begin with the raw amino-acid sequence, 115 residues long: U17-barytoxin-Tl1b (115 aa).

The first 20 residues, 1 to 20 (MKTIIVFLSLLVLATKFGDA), serve as a signal peptide directing secretion. Positions 21-74 (KEGVNQKQKKEVTQNEFREEYLNEMAAMSLVQQLEAIERALFENEAGRNSRQKR) are excised as a propeptide. Intrachain disulfides connect Cys-75-Cys-89, Cys-82-Cys-94, and Cys-88-Cys-109.

The protein belongs to the neurotoxin 14 (magi-1) family. 03 (ICK-30-40) subfamily. In terms of tissue distribution, expressed by the venom gland.

It localises to the secreted. Functionally, ion channel inhibitor. The protein is U17-barytoxin-Tl1b of Trittame loki (Brush-footed trapdoor spider).